Reading from the N-terminus, the 168-residue chain is Cyclin-dependent kinase 4 inhibitor C (168 aa).

ANK repeat units lie at residues Pro-4–Ala-33, Phe-37–Leu-65, Thr-69–Ile-98, Glu-102–His-132, and Lys-136–Thr-165.

It belongs to the CDKN2 cyclin-dependent kinase inhibitor family. Heterodimer of p18 with CDK6.

Interacts strongly with CDK6, weakly with CDK4. Inhibits cell growth and proliferation with a correlated dependence on endogenous retinoblastoma protein RB. The chain is Cyclin-dependent kinase 4 inhibitor C (Cdkn2c) from Mus musculus (Mouse).